A 193-amino-acid chain; its full sequence is Putative manganese efflux pump MntP (193 aa).

The next 6 helical transmembrane spans lie at 6–26 (VIFIALGLSADCFAVSIGIAC), 48–68 (AGMVVIGFFAGLSVIDIISAF), 71–91 (WIAFGLLLFIGVRMIYEALQG), 108–128 (LLGVAVATSIDALAVGLAFAV), 132–152 (NIGLAALLIGLVSLTVSFLGF), and 165–185 (WVGVAGGLVLVFIGLKILAEH).

This sequence belongs to the MntP (TC 9.B.29) family.

Its subcellular location is the cell membrane. In terms of biological role, probably functions as a manganese efflux pump. This Dehalococcoides mccartyi (strain ATCC BAA-2100 / JCM 16839 / KCTC 5957 / BAV1) protein is Putative manganese efflux pump MntP.